Reading from the N-terminus, the 369-residue chain is Septin-5 (369 aa).

T13 is subject to Phosphothreonine. Positions 41–314 (KGFDFTLMVA…ENYRAHCIQQ (274 aa)) constitute a Septin-type G domain. The interval 51–58 (GESGLGKS) is G1 motif. Residues 51 to 58 (GESGLGKS), T85, and G111 each bind GTP. Positions 108–111 (DTPG) are G3 motif. The residue at position 168 (R168) is an Omega-N-methylarginine. The interval 189-192 (AKAD) is G4 motif. 190-198 (KADCLVPSE) is a binding site for GTP. S225 carries the phosphoserine modification. Residues G248 and R263 each coordinate GTP. Position 327 is a phosphoserine (S327). Phosphothreonine is present on T336. Residues 338-369 (DAETEKLIRMKDEELRRMQEMLQRMKQQMQDQ) adopt a coiled-coil conformation.

The protein belongs to the TRAFAC class TrmE-Era-EngA-EngB-Septin-like GTPase superfamily. Septin GTPase family. In terms of assembly, septins polymerize into heterooligomeric protein complexes that form filaments, and can associate with cellular membranes, actin filaments and microtubules. GTPase activity is required for filament formation. Interacts with SEPTIN2 and SEPTIN5. In platelets, associated with a complex containing STX4. Interacts with PRKN; this interaction leads to SEPTIN5 ubiquitination and degradation. Interacts with DYRK1A. Interacts with STX1A; in the cerebellar cortex. Post-translationally, phosphorylated by DYRK1A. In platelets, phosphorylated in response to thrombin, phorbol-12-myristate-13-acetate and collagen. Expressed at high levels in the CNS, as well as in heart and platelets (at protein level).

The protein localises to the cytoplasm. It localises to the cytoskeleton. Filament-forming cytoskeletal GTPase. May play a role in cytokinesis (Potential). May play a role in platelet secretion. The protein is Septin-5 of Homo sapiens (Human).